The chain runs to 281 residues: Energy-coupling factor transporter ATP-binding protein EcfA1 (281 aa).

The 236-residue stretch at 7-242 (ISVEDIVFRY…NKELVRIGLD (236 aa)) folds into the ABC transporter domain. 42-49 (GHNGSGKS) lines the ATP pocket. Glu168 (proton acceptor) is an active-site residue.

Belongs to the ABC transporter superfamily. Energy-coupling factor EcfA family. As to quaternary structure, forms a stable energy-coupling factor (ECF) transporter complex composed of 2 membrane-embedded substrate-binding proteins (S component), 2 ATP-binding proteins (A component) and 2 transmembrane proteins (T component).

The protein localises to the cell membrane. Its function is as follows. ATP-binding (A) component of a common energy-coupling factor (ECF) ABC-transporter complex. Unlike classic ABC transporters this ECF transporter provides the energy necessary to transport a number of different substrates. The chain is Energy-coupling factor transporter ATP-binding protein EcfA1 from Bacillus subtilis (strain 168).